Reading from the N-terminus, the 199-residue chain is Recombination protein RecR (199 aa).

The segment at 57-72 adopts a C4-type zinc-finger fold; sequence CSSCRTFTEESLCPIC. Positions 81–176 constitute a Toprim domain; the sequence is DLICVVETPA…NVSRIAHGVP (96 aa).

It belongs to the RecR family.

May play a role in DNA repair. It seems to be involved in an RecBC-independent recombinational process of DNA repair. It may act with RecF and RecO. This Shewanella loihica (strain ATCC BAA-1088 / PV-4) protein is Recombination protein RecR.